The following is a 360-amino-acid chain: Aminomethyltransferase (360 aa).

Belongs to the GcvT family. The glycine cleavage system is composed of four proteins: P, T, L and H.

It carries out the reaction N(6)-[(R)-S(8)-aminomethyldihydrolipoyl]-L-lysyl-[protein] + (6S)-5,6,7,8-tetrahydrofolate = N(6)-[(R)-dihydrolipoyl]-L-lysyl-[protein] + (6R)-5,10-methylene-5,6,7,8-tetrahydrofolate + NH4(+). The glycine cleavage system catalyzes the degradation of glycine. This Pseudomonas putida (strain ATCC 47054 / DSM 6125 / CFBP 8728 / NCIMB 11950 / KT2440) protein is Aminomethyltransferase.